The following is a 241-amino-acid chain: Glucosamine-6-phosphate deaminase (241 aa).

The Proton acceptor; for enolization step role is filled by D67. Catalysis depends on N136, which acts as the For ring-opening step. The active-site Proton acceptor; for ring-opening step is H138. The active-site For ring-opening step is the E143.

The protein belongs to the glucosamine/galactosamine-6-phosphate isomerase family. NagB subfamily.

It carries out the reaction alpha-D-glucosamine 6-phosphate + H2O = beta-D-fructose 6-phosphate + NH4(+). It participates in amino-sugar metabolism; N-acetylneuraminate degradation; D-fructose 6-phosphate from N-acetylneuraminate: step 5/5. Functionally, catalyzes the reversible isomerization-deamination of glucosamine 6-phosphate (GlcN6P) to form fructose 6-phosphate (Fru6P) and ammonium ion. The sequence is that of Glucosamine-6-phosphate deaminase from Halothermothrix orenii (strain H 168 / OCM 544 / DSM 9562).